Here is a 62-residue protein sequence, read N- to C-terminus: MSLKITEECTFCAACEPECPVNAISAGSDIYVIDESACTECEGYADSPACVAVCPAECIVKA.

2 4Fe-4S ferredoxin-type domains span residues 2 to 28 and 29 to 62; these read SLKI…SAGS and DIYV…IVKA. [4Fe-4S] cluster-binding residues include Cys9, Cys12, Cys15, Cys19, Cys38, Cys41, Cys50, and Cys54.

Requires [4Fe-4S] cluster as cofactor.

Its function is as follows. Ferredoxins are iron-sulfur proteins that transfer electrons in a wide variety of metabolic reactions. The protein is Ferredoxin-3 of Chlorobaculum tepidum (strain ATCC 49652 / DSM 12025 / NBRC 103806 / TLS) (Chlorobium tepidum).